Reading from the N-terminus, the 238-residue chain is Pyridoxine 5'-phosphate synthase (238 aa).

A 3-amino-2-oxopropyl phosphate-binding site is contributed by Asn9. 11–12 is a 1-deoxy-D-xylulose 5-phosphate binding site; sequence DH. Arg20 serves as a coordination point for 3-amino-2-oxopropyl phosphate. His45 functions as the Proton acceptor in the catalytic mechanism. 1-deoxy-D-xylulose 5-phosphate is bound by residues Arg47 and His52. Residue Glu72 is the Proton acceptor of the active site. Residue Thr102 participates in 1-deoxy-D-xylulose 5-phosphate binding. Catalysis depends on His189, which acts as the Proton donor. 3-amino-2-oxopropyl phosphate is bound by residues Gly190 and 211–212; that span reads GH.

Belongs to the PNP synthase family. As to quaternary structure, homooctamer; tetramer of dimers.

Its subcellular location is the cytoplasm. The enzyme catalyses 3-amino-2-oxopropyl phosphate + 1-deoxy-D-xylulose 5-phosphate = pyridoxine 5'-phosphate + phosphate + 2 H2O + H(+). Its pathway is cofactor biosynthesis; pyridoxine 5'-phosphate biosynthesis; pyridoxine 5'-phosphate from D-erythrose 4-phosphate: step 5/5. Functionally, catalyzes the complicated ring closure reaction between the two acyclic compounds 1-deoxy-D-xylulose-5-phosphate (DXP) and 3-amino-2-oxopropyl phosphate (1-amino-acetone-3-phosphate or AAP) to form pyridoxine 5'-phosphate (PNP) and inorganic phosphate. The sequence is that of Pyridoxine 5'-phosphate synthase from Ehrlichia ruminantium (strain Gardel).